Reading from the N-terminus, the 92-residue chain is Small ribosomal subunit protein uS19 (92 aa).

The protein belongs to the universal ribosomal protein uS19 family.

Functionally, protein S19 forms a complex with S13 that binds strongly to the 16S ribosomal RNA. The polypeptide is Small ribosomal subunit protein uS19 (Borrelia duttonii (strain Ly)).